Consider the following 76-residue polypeptide: Esculentin-2SN1 (76 aa).

The N-terminal stretch at 1 to 22 (MFTMKKSLLFLFFLGTISLSLC) is a signal peptide. The propeptide occupies 23-37 (EQERGADEDDGGEEV). Cysteine 70 and cysteine 76 are oxidised to a cystine.

Belongs to the frog skin active peptide (FSAP) family. Esculentin subfamily. In terms of tissue distribution, expressed by the skin glands.

Its subcellular location is the secreted. Functionally, antimicrobial peptide. Active against some Gram-negative and a variety of Gram-positive bacterial strains. Not active against fungi. Shows very weak hemolytic activity against human erythrocytes. The chain is Esculentin-2SN1 from Sylvirana spinulosa (Fine-spined frog).